The following is a 328-amino-acid chain: MPLHHLTRFPRLELIGAPTPLEYLPRLSDYPGREIYIKRDDVTPIAMGGNKLRKLEFLVADALREGADTLITAGAIQSNHVRQTAAVAAKLGLHCVALLENPIGTTAENYLTNGNRLLLDLFNTQIEMCDVLTDPDAQLQTLATRIEAQGFRPYVIPVGGSSALGAMGYVESALEIAQQCEEVVGLSSVVVASGSAGTHAGLAVGLEHLMPDVELIGVTVSRSVAEQKPKVIALQQAIAGQLALTATADIHLWDDYFAPGYGVPNDAGMEAVKLLASLEGVLLDPVYTGKAMAGLIDGISQKRFNDDGPILFIHTGGAPALFAYHPHV.

Lysine 51 carries the N6-(pyridoxal phosphate)lysine modification.

It belongs to the ACC deaminase/D-cysteine desulfhydrase family. As to quaternary structure, homodimer. Pyridoxal 5'-phosphate is required as a cofactor.

It carries out the reaction D-cysteine + H2O = hydrogen sulfide + pyruvate + NH4(+) + H(+). Catalyzes the alpha,beta-elimination reaction of D-cysteine and of several D-cysteine derivatives. It could be a defense mechanism against D-cysteine. This is D-cysteine desulfhydrase from Salmonella paratyphi A (strain AKU_12601).